The following is a 480-amino-acid chain: 2-succinylbenzoate--CoA ligase (480 aa).

Belongs to the ATP-dependent AMP-binding enzyme family. MenE subfamily.

It catalyses the reaction 2-succinylbenzoate + ATP + CoA = 2-succinylbenzoyl-CoA + AMP + diphosphate. It functions in the pathway quinol/quinone metabolism; 1,4-dihydroxy-2-naphthoate biosynthesis; 1,4-dihydroxy-2-naphthoate from chorismate: step 5/7. Its pathway is quinol/quinone metabolism; menaquinone biosynthesis. Functionally, converts 2-succinylbenzoate (OSB) to 2-succinylbenzoyl-CoA (OSB-CoA). This is 2-succinylbenzoate--CoA ligase from Oceanobacillus iheyensis (strain DSM 14371 / CIP 107618 / JCM 11309 / KCTC 3954 / HTE831).